The sequence spans 124 residues: uncharacterized protein (124 aa).

A helical transmembrane segment spans residues 2–22 (AIIIAIIAAVIVIAALITFNV). The tract at residues 24-124 (NASPGPEKQE…ALLSMKNKKK (101 aa)) is disordered. Composition is skewed to basic and acidic residues over residues 30 to 58 (EKQE…RAAE), 67 to 81 (DSPK…DDIY), and 89 to 113 (KHSD…RSYR).

The protein localises to the membrane. This is an uncharacterized protein from Bacillus subtilis (strain 168).